The sequence spans 184 residues: ATP synthase subunit delta (184 aa).

The protein belongs to the ATPase delta chain family. F-type ATPases have 2 components, F(1) - the catalytic core - and F(0) - the membrane proton channel. F(1) has five subunits: alpha(3), beta(3), gamma(1), delta(1), epsilon(1). F(0) has three main subunits: a(1), b(2) and c(10-14). The alpha and beta chains form an alternating ring which encloses part of the gamma chain. F(1) is attached to F(0) by a central stalk formed by the gamma and epsilon chains, while a peripheral stalk is formed by the delta and b chains.

Its subcellular location is the cell inner membrane. F(1)F(0) ATP synthase produces ATP from ADP in the presence of a proton or sodium gradient. F-type ATPases consist of two structural domains, F(1) containing the extramembraneous catalytic core and F(0) containing the membrane proton channel, linked together by a central stalk and a peripheral stalk. During catalysis, ATP synthesis in the catalytic domain of F(1) is coupled via a rotary mechanism of the central stalk subunits to proton translocation. In terms of biological role, this protein is part of the stalk that links CF(0) to CF(1). It either transmits conformational changes from CF(0) to CF(1) or is implicated in proton conduction. This Magnetococcus marinus (strain ATCC BAA-1437 / JCM 17883 / MC-1) protein is ATP synthase subunit delta.